The primary structure comprises 76 residues: Small ribosomal subunit protein bS21A (76 aa).

Residues 35-52 (HYEKPSEKRAREKAEAVR) show a composition bias toward basic and acidic residues. The interval 35–76 (HYEKPSEKRAREKAEAVRRARKLARKRAQREGLVSGRPAAAR) is disordered. Residues 53-62 (RARKLARKRA) show a composition bias toward basic residues.

This sequence belongs to the bacterial ribosomal protein bS21 family.

This Chelativorans sp. (strain BNC1) protein is Small ribosomal subunit protein bS21A.